Here is a 365-residue protein sequence, read N- to C-terminus: MLRTPLYELCRTGGGRMVPFAGWEMPVQFSGLIQEHKAVRNSVGMFDISHMGVLRLEGANPKDTLQQLVPSDLHRIGPGEACYTVLLNDQGGIRDDLIIYDLGAIDEKRGALVLVINAACADSDTAWIRERMEPAGLTVTDIKNNGVLLALQGPQAIPLLEQLSGEDLSGLPRFGHRDLQIQGLSNSVFTARTGYTGEDGAELLLTAEDGQLLWSQLLEKGVAPCGLGARDTLRLEAAMHLYGQDMNADTNPFEAGLGWLVHLEMPADFIGRQALERAAETGPNKRLVGLKLEGRAIARHDYPVLHNGEPVGVVTSGTWSPTLEEPIALASIPTALAKLGTNLSVEIRGKAQPATVVRRPFYKRP.

It belongs to the GcvT family. In terms of assembly, the glycine cleavage system is composed of four proteins: P, T, L and H.

The enzyme catalyses N(6)-[(R)-S(8)-aminomethyldihydrolipoyl]-L-lysyl-[protein] + (6S)-5,6,7,8-tetrahydrofolate = N(6)-[(R)-dihydrolipoyl]-L-lysyl-[protein] + (6R)-5,10-methylene-5,6,7,8-tetrahydrofolate + NH4(+). In terms of biological role, the glycine cleavage system catalyzes the degradation of glycine. This is Aminomethyltransferase from Synechococcus sp. (strain CC9902).